Consider the following 266-residue polypeptide: Mitochondrial S-adenosylmethionine carrier protein (266 aa).

3 Solcar repeats span residues Arg-4 to Phe-77, Leu-85 to Leu-167, and Val-176 to Ser-264. 6 helical membrane passes run Glu-5–Phe-25, Ile-49–Val-69, Tyr-84–Ile-104, Arg-141–Trp-161, Ser-181–Val-201, and Phe-237–Ala-257.

It belongs to the mitochondrial carrier (TC 2.A.29) family.

Its subcellular location is the mitochondrion inner membrane. The catalysed reaction is S-adenosyl-L-homocysteine(out) + S-adenosyl-L-methionine(in) = S-adenosyl-L-homocysteine(in) + S-adenosyl-L-methionine(out). Its function is as follows. Mitochondrial S-adenosyl-L-methionine/S-adenosyl-L-homocysteine antiporter. Mediates the exchange of cytosolic S-adenosyl-L-methionine, the predominant methyl-group donor for macromolecule methylation processes, for mitochondrial S-adenosylhomocysteine(SAH), a by-product of methylation reactions. The polypeptide is Mitochondrial S-adenosylmethionine carrier protein (slc25a26) (Xenopus laevis (African clawed frog)).